The following is a 343-amino-acid chain: Heat-inducible transcription repressor HrcA (343 aa).

This sequence belongs to the HrcA family.

Functionally, negative regulator of class I heat shock genes (grpE-dnaK-dnaJ and groELS operons). Prevents heat-shock induction of these operons. The polypeptide is Heat-inducible transcription repressor HrcA (Clostridium botulinum (strain Eklund 17B / Type B)).